We begin with the raw amino-acid sequence, 169 residues long: S-ribosylhomocysteine lyase (169 aa).

Positions 54, 58, and 128 each coordinate Fe cation.

This sequence belongs to the LuxS family. As to quaternary structure, homodimer. It depends on Fe cation as a cofactor.

It catalyses the reaction S-(5-deoxy-D-ribos-5-yl)-L-homocysteine = (S)-4,5-dihydroxypentane-2,3-dione + L-homocysteine. Its function is as follows. Involved in the synthesis of autoinducer 2 (AI-2) which is secreted by bacteria and is used to communicate both the cell density and the metabolic potential of the environment. The regulation of gene expression in response to changes in cell density is called quorum sensing. Catalyzes the transformation of S-ribosylhomocysteine (RHC) to homocysteine (HC) and 4,5-dihydroxy-2,3-pentadione (DPD). This Shewanella frigidimarina (strain NCIMB 400) protein is S-ribosylhomocysteine lyase.